The primary structure comprises 117 residues: MDKKSARIRRAARARHMMREQGVTRLVVHRTPRHIYAQVIAPNGSEVLAAASTVEKEISAQVKYTGNKDAAAVVGKLVAERALAKGVKDVAFDRSGFKYHGRVQSLADAAREAGLQF.

This sequence belongs to the universal ribosomal protein uL18 family. In terms of assembly, part of the 50S ribosomal subunit; part of the 5S rRNA/L5/L18/L25 subcomplex. Contacts the 5S and 23S rRNAs.

In terms of biological role, this is one of the proteins that bind and probably mediate the attachment of the 5S RNA into the large ribosomal subunit, where it forms part of the central protuberance. In Actinobacillus succinogenes (strain ATCC 55618 / DSM 22257 / CCUG 43843 / 130Z), this protein is Large ribosomal subunit protein uL18.